The following is a 90-amino-acid chain: Small ribosomal subunit protein bS20 (90 aa).

The interval 1–21 (MANHKSALKRVRQTKKRTERN) is disordered.

The protein belongs to the bacterial ribosomal protein bS20 family.

In terms of biological role, binds directly to 16S ribosomal RNA. The chain is Small ribosomal subunit protein bS20 from Nitratiruptor sp. (strain SB155-2).